The chain runs to 190 residues: Holliday junction branch migration complex subunit RuvA (190 aa).

The domain I stretch occupies residues 1–65 (MIGNLSGIVD…ENVAQLYGFI (65 aa)). The interval 66–143 (SKEEQQCLRL…KLEINNNNFH (78 aa)) is domain II. A flexible linker region spans residues 144–147 (PINE). A domain III region spans residues 147–190 (EDALSALINLGYEKMKAYDTIKKYRPNLDTKDIIRMALKELSIL).

The protein belongs to the RuvA family. As to quaternary structure, homotetramer. Forms an RuvA(8)-RuvB(12)-Holliday junction (HJ) complex. HJ DNA is sandwiched between 2 RuvA tetramers; dsDNA enters through RuvA and exits via RuvB. An RuvB hexamer assembles on each DNA strand where it exits the tetramer. Each RuvB hexamer is contacted by two RuvA subunits (via domain III) on 2 adjacent RuvB subunits; this complex drives branch migration. In the full resolvosome a probable DNA-RuvA(4)-RuvB(12)-RuvC(2) complex forms which resolves the HJ.

Its subcellular location is the cytoplasm. Its function is as follows. The RuvA-RuvB-RuvC complex processes Holliday junction (HJ) DNA during genetic recombination and DNA repair, while the RuvA-RuvB complex plays an important role in the rescue of blocked DNA replication forks via replication fork reversal (RFR). RuvA specifically binds to HJ cruciform DNA, conferring on it an open structure. The RuvB hexamer acts as an ATP-dependent pump, pulling dsDNA into and through the RuvAB complex. HJ branch migration allows RuvC to scan DNA until it finds its consensus sequence, where it cleaves and resolves the cruciform DNA. The polypeptide is Holliday junction branch migration complex subunit RuvA (Wolbachia pipientis wMel).